A 339-amino-acid polypeptide reads, in one-letter code: Type IV secretion system protein PtlH homolog (339 aa).

It belongs to the GSP E family.

This chain is Type IV secretion system protein PtlH homolog (ptlH), found in Bordetella parapertussis (strain 12822 / ATCC BAA-587 / NCTC 13253).